The following is a 278-amino-acid chain: Undecaprenyl-diphosphatase (278 aa).

8 helical membrane-spanning segments follow: residues 3–23, 42–62, 88–108, 112–132, 152–172, 190–210, 225–245, and 253–273; these read YILIGVILGIVQGISEWIPIS, VAYSFGLFMEIGTIAAAIIYF, FLVIVTIITGLMGVPLYLFVI, ILGLPMTVLGVVLLTDGIIIY, IIIVGIAQGLAALPGVSRSGI, LSFISLIPAALGAIGVTVLFS, GLLISIVVATFVSIFFINALL, and VVVLVIILGIIAIISGILSGI.

It belongs to the UppP family.

The protein localises to the cell membrane. The enzyme catalyses di-trans,octa-cis-undecaprenyl diphosphate + H2O = di-trans,octa-cis-undecaprenyl phosphate + phosphate + H(+). Its function is as follows. Catalyzes the dephosphorylation of undecaprenyl diphosphate (UPP). This chain is Undecaprenyl-diphosphatase, found in Saccharolobus islandicus (strain M.14.25 / Kamchatka #1) (Sulfolobus islandicus).